Reading from the N-terminus, the 388-residue chain is Alanine racemase 1 (388 aa).

The active-site Proton acceptor; specific for D-alanine is the Lys-40. An N6-(pyridoxal phosphate)lysine modification is found at Lys-40. Substrate is bound at residue Arg-138. Tyr-268 (proton acceptor; specific for L-alanine) is an active-site residue. Substrate is bound at residue Met-316.

This sequence belongs to the alanine racemase family. Pyridoxal 5'-phosphate is required as a cofactor.

The catalysed reaction is L-alanine = D-alanine. Its pathway is amino-acid biosynthesis; D-alanine biosynthesis; D-alanine from L-alanine: step 1/1. Functionally, catalyzes the interconversion of L-alanine and D-alanine. May also act on other amino acids. The sequence is that of Alanine racemase 1 (alr1) from Caldanaerobacter subterraneus subsp. tengcongensis (strain DSM 15242 / JCM 11007 / NBRC 100824 / MB4) (Thermoanaerobacter tengcongensis).